We begin with the raw amino-acid sequence, 1040 residues long: Multidrug resistance protein MdtB (1040 aa).

The next 11 membrane-spanning stretches (helical) occupy residues 15 to 37 (LFIM…GIIG), 345 to 362 (FELM…YLFL), 367 to 389 (ATII…MVFL), 396 to 418 (LTLM…VIEN), 438 to 460 (GEIG…PLLF), 472 to 494 (FAIT…TPMM), 535 to 557 (HPWL…WVFI), 867 to 889 (VWLI…ESFI), 909 to 931 (LMIA…IGIV), 968 to 990 (ILMT…GVGA), and 1000 to 1022 (MVGG…YLLF).

Belongs to the resistance-nodulation-cell division (RND) (TC 2.A.6) family. MdtB subfamily. As to quaternary structure, part of a tripartite efflux system composed of MdtA, MdtB and MdtC. MdtB forms a heteromultimer with MdtC.

The protein localises to the cell inner membrane. Functionally, the MdtABC tripartite complex confers resistance against novobiocin and deoxycholate. The sequence is that of Multidrug resistance protein MdtB from Escherichia coli O157:H7.